The primary structure comprises 183 residues: Capsid protein (183 aa).

The interval 136–183 (NAPILSTLPETTVVRRRGRSPRRRTPSPRRRRSQSPRRRRSQSRESQC) is disordered. Positions 149–176 (VRRRGRSPRRRTPSPRRRRSQSPRRRRS) are enriched in basic residues. S155, S162, and S170 each carry phosphoserine; by host. One copy of the 1; half-length repeat lies at 155–161 (SPRRRTP). Residues 155 to 177 (SPRRRTPSPRRRRSQSPRRRRSQ) are 3 X 8 AA repeats of S-P-R-R-R-[PR]-S-Q. The Bipartite nuclear localization signal motif lies at 158–175 (RRTPSPRRRRSQSPRRRR). Tandem repeats lie at residues 162-169 (SPRRRRSQ) and 170-177 (SPRRRRSQ). The tract at residues 177-183 (QSRESQC) is RNA binding.

This sequence belongs to the orthohepadnavirus core antigen family. As to quaternary structure, homodimerizes, then multimerizes. Interacts with cytosol exposed regions of viral L glycoprotein present in the reticulum-to-Golgi compartment. Interacts with human FLNB. Phosphorylated form interacts with host importin alpha; this interaction depends on the exposure of the NLS, which itself depends upon genome maturation and/or phosphorylation of the capsid protein. Interacts with host NUP153. In terms of processing, phosphorylated by host SRPK1, SRPK2, and maybe protein kinase C or GAPDH. Phosphorylation is critical for pregenomic RNA packaging. Protein kinase C phosphorylation is stimulated by HBx protein and may play a role in transport of the viral genome to the nucleus at the late step during the viral replication cycle.

It is found in the virion. It localises to the host cytoplasm. In terms of biological role, self assembles to form an icosahedral capsid. Most capsids appear to be large particles with an icosahedral symmetry of T=4 and consist of 240 copies of capsid protein, though a fraction forms smaller T=3 particles consisting of 180 capsid proteins. Entering capsids are transported along microtubules to the nucleus. Phosphorylation of the capsid is thought to induce exposure of nuclear localization signal in the C-terminal portion of the capsid protein that allows binding to the nuclear pore complex via the importin (karyopherin-) alpha and beta. Capsids are imported in intact form through the nuclear pore into the nuclear basket, where it probably binds NUP153. Only capsids that contain the mature viral genome can release the viral DNA and capsid protein into the nucleoplasm. Immature capsids get stuck in the basket. Capsids encapsulate the pre-genomic RNA and the P protein. Pre-genomic RNA is reverse-transcribed into DNA while the capsid is still in the cytoplasm. The capsid can then either be directed to the nucleus, providing more genomes for transcription, or bud through the endoplasmic reticulum to provide new virions. This chain is Capsid protein, found in Hepatitis B virus genotype B2 (isolate Indonesia/pIDW420/1988) (HBV-B).